The following is a 259-amino-acid chain: Phosphoadenosine 5'-phosphosulfate reductase (259 aa).

Residue Cys244 is the Nucleophile; cysteine thiosulfonate intermediate of the active site.

It belongs to the PAPS reductase family. CysH subfamily.

It is found in the cytoplasm. The catalysed reaction is [thioredoxin]-disulfide + sulfite + adenosine 3',5'-bisphosphate + 2 H(+) = [thioredoxin]-dithiol + 3'-phosphoadenylyl sulfate. It participates in sulfur metabolism; hydrogen sulfide biosynthesis; sulfite from sulfate: step 3/3. Its function is as follows. Catalyzes the formation of sulfite from phosphoadenosine 5'-phosphosulfate (PAPS) using thioredoxin as an electron donor. The protein is Phosphoadenosine 5'-phosphosulfate reductase of Vibrio campbellii (strain ATCC BAA-1116).